The sequence spans 667 residues: DNA ligase (667 aa).

Residues 32 to 36 (DSEYD), 81 to 82 (SL), and Glu-110 contribute to the NAD(+) site. Lys-112 serves as the catalytic N6-AMP-lysine intermediate. The NAD(+) site is built by Arg-133, Glu-167, Lys-283, and Lys-307. Residues Cys-401, Cys-404, Cys-419, and Cys-424 each contribute to the Zn(2+) site. The 82-residue stretch at 586–667 (EGHPEFSGKT…FVDKQNELNS (82 aa)) folds into the BRCT domain.

It belongs to the NAD-dependent DNA ligase family. LigA subfamily. The cofactor is Mg(2+). Requires Mn(2+) as cofactor.

It carries out the reaction NAD(+) + (deoxyribonucleotide)n-3'-hydroxyl + 5'-phospho-(deoxyribonucleotide)m = (deoxyribonucleotide)n+m + AMP + beta-nicotinamide D-nucleotide.. DNA ligase that catalyzes the formation of phosphodiester linkages between 5'-phosphoryl and 3'-hydroxyl groups in double-stranded DNA using NAD as a coenzyme and as the energy source for the reaction. It is essential for DNA replication and repair of damaged DNA. This Staphylococcus aureus (strain COL) protein is DNA ligase.